We begin with the raw amino-acid sequence, 345 residues long: Dihydroorotase (345 aa).

His13 and His15 together coordinate Zn(2+). Residues 15–17 (HLR) and Asn41 contribute to the substrate site. The Zn(2+) site is built by Lys99, His136, His174, and Asp247. Lys99 is subject to N6-carboxylysine. His136 contacts substrate. Asp247 is an active-site residue. 2 residues coordinate substrate: His251 and Ala263.

It belongs to the metallo-dependent hydrolases superfamily. DHOase family. Class II DHOase subfamily. As to quaternary structure, homodimer. Zn(2+) serves as cofactor.

It carries out the reaction (S)-dihydroorotate + H2O = N-carbamoyl-L-aspartate + H(+). Its pathway is pyrimidine metabolism; UMP biosynthesis via de novo pathway; (S)-dihydroorotate from bicarbonate: step 3/3. Catalyzes the reversible cyclization of carbamoyl aspartate to dihydroorotate. The sequence is that of Dihydroorotase from Halorhodospira halophila (strain DSM 244 / SL1) (Ectothiorhodospira halophila (strain DSM 244 / SL1)).